A 359-amino-acid polypeptide reads, in one-letter code: Peroxisome assembly protein 12 (359 aa).

The Peroxisomal matrix portion of the chain corresponds to 1-24; that stretch reads MSTTIRASQLASSISPKTEEKQPS. The helical transmembrane segment at 25 to 52 threads the bilayer; it reads VFDIIAQENLATSIRPALQHLVKYLAFF. At 53 to 56 the chain is on the cytoplasmic side; sequence KPKT. The helical transmembrane segment at 57–81 threads the bilayer; that stretch reads FLSVHRNFDEYYIIFDLILQNHYLR. The Peroxisomal matrix portion of the chain corresponds to 82 to 106; that stretch reads NYGASFTENFYSMKRIASGTGNPPN. Residues 107 to 128 form a helical membrane-spanning segment; it reads DGRERIMSLITLVGWPYVENKL. The Cytoplasmic segment spans residues 129–133; the sequence is NQLYD. A helical membrane pass occupies residues 134–184; it reads RLKEVYECRSWSSINGMKAKCQKMFVIIWPYIKTALKAVKSALQLAYILNR. The Peroxisomal matrix portion of the chain corresponds to 185-253; it reads SSIHSPWLYF…ILGLPGIVSR (69 aa). Residues 254 to 281 traverse the membrane as a helical segment; the sequence is LFAYGLFFVQFLDYMYNTDLAKLTKTGL. Residues 282–359 are Cytoplasmic-facing; the sequence is DGAIPSPPHK…NVQHLIRLFV (78 aa). Residues C307, C310, C328, and C331 each contribute to the Zn(2+) site. The segment at 307–346 adopts an RING-type; degenerate zinc-finger fold; sequence CPICLKKRVNDTALFVSGYVFCYTCINQYVNTYNKCPVTG.

It belongs to the pex2/pex10/pex12 family. Component of the PEX2-PEX10-PEX12 retrotranslocation channel.

The protein localises to the peroxisome membrane. It participates in protein modification; protein ubiquitination. Functionally, component of a retrotranslocation channel required for peroxisome organization by mediating export of the PEX5/prx-5 receptor from peroxisomes to the cytosol, thereby promoting PEX5/prx-5 recycling. The retrotranslocation channel is composed of PEX2/prx-2, PEX10/prx-10 and PEX12/prx-12; each subunit contributing transmembrane segments that coassemble into an open channel that specifically allows the passage of PEX5/prx-5 through the peroxisomal membrane. PEX12/prx-12 also regulates PEX5/prx-5 recycling by activating the E3 ubiquitin-protein ligase activity of PEX10/prx-10. When PEX5 recycling is compromised, PEX12/prx-12 stimulates PEX10-mediated polyubiquitination of PEX5/prx-5, leading to its subsequent degradation. This Caenorhabditis elegans protein is Peroxisome assembly protein 12 (prx-12).